We begin with the raw amino-acid sequence, 274 residues long: Thiazole synthase (274 aa).

Catalysis depends on lysine 115, which acts as the Schiff-base intermediate with DXP. 1-deoxy-D-xylulose 5-phosphate contacts are provided by residues glycine 176, 202-203, and 224-225; these read AG and NS.

Belongs to the ThiG family. Homotetramer. Forms heterodimers with either ThiH or ThiS.

The protein resides in the cytoplasm. It carries out the reaction [ThiS sulfur-carrier protein]-C-terminal-Gly-aminoethanethioate + 2-iminoacetate + 1-deoxy-D-xylulose 5-phosphate = [ThiS sulfur-carrier protein]-C-terminal Gly-Gly + 2-[(2R,5Z)-2-carboxy-4-methylthiazol-5(2H)-ylidene]ethyl phosphate + 2 H2O + H(+). It functions in the pathway cofactor biosynthesis; thiamine diphosphate biosynthesis. Functionally, catalyzes the rearrangement of 1-deoxy-D-xylulose 5-phosphate (DXP) to produce the thiazole phosphate moiety of thiamine. Sulfur is provided by the thiocarboxylate moiety of the carrier protein ThiS. In vitro, sulfur can be provided by H(2)S. This chain is Thiazole synthase, found in Parasynechococcus marenigrum (strain WH8102).